We begin with the raw amino-acid sequence, 397 residues long: Acetate kinase (397 aa).

Residue Asn-7 coordinates Mg(2+). Lys-14 is a binding site for ATP. A substrate-binding site is contributed by Arg-91. The Proton donor/acceptor role is filled by Asp-148. ATP-binding positions include 208 to 212, 283 to 285, and 331 to 335; these read HLGNG, DFR, and GIGEN. Glu-384 lines the Mg(2+) pocket.

The protein belongs to the acetokinase family. Homodimer. Mg(2+) is required as a cofactor. The cofactor is Mn(2+).

The protein resides in the cytoplasm. The enzyme catalyses acetate + ATP = acetyl phosphate + ADP. Its pathway is metabolic intermediate biosynthesis; acetyl-CoA biosynthesis; acetyl-CoA from acetate: step 1/2. Catalyzes the formation of acetyl phosphate from acetate and ATP. Can also catalyze the reverse reaction. The polypeptide is Acetate kinase (Treponema denticola (strain ATCC 35405 / DSM 14222 / CIP 103919 / JCM 8153 / KCTC 15104)).